The primary structure comprises 358 residues: Peptide chain release factor 1 (358 aa).

Residue Q233 is modified to N5-methylglutamine.

The protein belongs to the prokaryotic/mitochondrial release factor family. In terms of processing, methylated by PrmC. Methylation increases the termination efficiency of RF1.

It localises to the cytoplasm. Functionally, peptide chain release factor 1 directs the termination of translation in response to the peptide chain termination codons UAG and UAA. This is Peptide chain release factor 1 from Macrococcus caseolyticus (strain JCSC5402) (Macrococcoides caseolyticum).